A 1358-amino-acid polypeptide reads, in one-letter code: DNA-directed RNA polymerase subunit beta (1358 aa).

The protein belongs to the RNA polymerase beta chain family. The RNAP catalytic core consists of 2 alpha, 1 beta, 1 beta' and 1 omega subunit. When a sigma factor is associated with the core the holoenzyme is formed, which can initiate transcription.

It carries out the reaction RNA(n) + a ribonucleoside 5'-triphosphate = RNA(n+1) + diphosphate. DNA-dependent RNA polymerase catalyzes the transcription of DNA into RNA using the four ribonucleoside triphosphates as substrates. The protein is DNA-directed RNA polymerase subunit beta of Francisella tularensis subsp. holarctica (strain OSU18).